The following is a 478-amino-acid chain: MELGVPLPRRPVPGSYGVPFVSAVRDRLDFYYLQGQDKYFESRAERYGSTVVRINVPPGPFMARDPRVVALLDAKSFPVLFDVAKVEKRDVFTGTFMPSTSLTGGYRVCAYLDPSEPNHAKIKQLLLSLLVSRKDAFVPVFRSNFGALLDTVESQLASGGGKSDFTALNDATSFEFIGEAYFGVRPSASSSLGTGGPTKAALWLLWQLAPLTTLGLPMIIEDPLLHTLPLPPFLISSDYKALYAYFAAAASQALDAAEGLGLSREEACHNLLFATVFNSYGGFKLLLPQILSRVAQAGEKLHERLAAEIRSAVADAGGNVTLAALEKMELTRSVVWEALRLDPPVRFQYGRAKADLEIESHDASFAIKKGEMLFGYQPCATRDPRVFGATAREFVGDRFVGEEGRKLLQYVYWSNGRETENPSVDNKQCPGKNLVVLVGRLLLVELFLRYDTFTAEAGKKVVITGVTKASTSAVNRTA.

Heme b-binding residues include Lys88, His119, and Lys123. Asn278 provides a ligand contact to (13S)-hydroperoxy-(9Z,11E,15Z)-octadecatrienoate. 2 residues coordinate heme b: Lys427 and Cys429.

The protein belongs to the cytochrome P450 family. It depends on heme b as a cofactor. As to expression, weakly expressed in roots, shoots, leaves and flowers.

The catalysed reaction is (13S)-hydroperoxy-(9Z,11E,15Z)-octadecatrienoate = (9Z,13S,15Z)-12,13-epoxyoctadeca-9,11,15-trienoate + H2O. Its pathway is lipid metabolism; oxylipin biosynthesis. Involved in the biosynthesis of jasmonic acid, a growth regulator that is implicated also as a signaling molecule in plant defense. Converts 13-hydroperoxylinolenic acid to 12,13-epoxylinolenic acid. This Oryza sativa subsp. japonica (Rice) protein is Allene oxide synthase 2 (CYP74A2).